Consider the following 105-residue polypeptide: Small ribosomal subunit protein uS10 (105 aa).

This sequence belongs to the universal ribosomal protein uS10 family. In terms of assembly, part of the 30S ribosomal subunit.

Its function is as follows. Involved in the binding of tRNA to the ribosomes. The sequence is that of Small ribosomal subunit protein uS10 from Legionella pneumophila (strain Paris).